Consider the following 343-residue polypeptide: Protein RecA (343 aa).

Residue 66 to 73 (GPESSGKT) participates in ATP binding.

It belongs to the RecA family.

The protein resides in the cytoplasm. Functionally, can catalyze the hydrolysis of ATP in the presence of single-stranded DNA, the ATP-dependent uptake of single-stranded DNA by duplex DNA, and the ATP-dependent hybridization of homologous single-stranded DNAs. It interacts with LexA causing its activation and leading to its autocatalytic cleavage. This chain is Protein RecA, found in Nitrosomonas eutropha (strain DSM 101675 / C91 / Nm57).